The primary structure comprises 199 residues: Peptidyl-tRNA hydrolase (199 aa).

Tyr-15 provides a ligand contact to tRNA. His-20 functions as the Proton acceptor in the catalytic mechanism. TRNA contacts are provided by Tyr-66, Asn-68, and Asn-114.

The protein belongs to the PTH family. As to quaternary structure, monomer.

Its subcellular location is the cytoplasm. The enzyme catalyses an N-acyl-L-alpha-aminoacyl-tRNA + H2O = an N-acyl-L-amino acid + a tRNA + H(+). Functionally, hydrolyzes ribosome-free peptidyl-tRNAs (with 1 or more amino acids incorporated), which drop off the ribosome during protein synthesis, or as a result of ribosome stalling. Catalyzes the release of premature peptidyl moieties from peptidyl-tRNA molecules trapped in stalled 50S ribosomal subunits, and thus maintains levels of free tRNAs and 50S ribosomes. The protein is Peptidyl-tRNA hydrolase of Burkholderia cenocepacia (strain ATCC BAA-245 / DSM 16553 / LMG 16656 / NCTC 13227 / J2315 / CF5610) (Burkholderia cepacia (strain J2315)).